A 61-amino-acid polypeptide reads, in one-letter code: uncharacterized protein (61 aa).

Positions 23 to 61 are disordered; the sequence is VPTKWQDYKKPGPNQKYTSDGKKRRRIRRSQKSILGVRS. Positions 44–53 are enriched in basic residues; that stretch reads KKRRRIRRSQ.

This is an uncharacterized protein from Archaeoglobus fulgidus (strain ATCC 49558 / DSM 4304 / JCM 9628 / NBRC 100126 / VC-16).